Here is a 306-residue protein sequence, read N- to C-terminus: Dihydroorotate dehydrogenase B (NAD(+)), catalytic subunit (306 aa).

FMN contacts are provided by residues Ser23 and 47–48 (KS). Substrate contacts are provided by residues Lys47, 71-75 (NAMGL), and Asn130. Asn130 lines the FMN pocket. Cys133 serves as the catalytic Nucleophile. Positions 168 and 194 each coordinate FMN. Residue 195–196 (NT) coordinates substrate. FMN-binding positions include Gly220, 246–247 (GG), and 268–269 (GS).

This sequence belongs to the dihydroorotate dehydrogenase family. Type 1 subfamily. In terms of assembly, heterotetramer of 2 PyrK and 2 PyrD type B subunits. The cofactor is FMN.

It is found in the cytoplasm. It carries out the reaction (S)-dihydroorotate + NAD(+) = orotate + NADH + H(+). The protein operates within pyrimidine metabolism; UMP biosynthesis via de novo pathway; orotate from (S)-dihydroorotate (NAD(+) route): step 1/1. Its function is as follows. Catalyzes the conversion of dihydroorotate to orotate with NAD(+) as electron acceptor. The sequence is that of Dihydroorotate dehydrogenase B (NAD(+)), catalytic subunit (pyrD) from Methanocaldococcus jannaschii (strain ATCC 43067 / DSM 2661 / JAL-1 / JCM 10045 / NBRC 100440) (Methanococcus jannaschii).